A 261-amino-acid chain; its full sequence is Glutamate racemase (261 aa).

Substrate is bound by residues 9-10 and 41-42; these read DS and YG. The Proton donor/acceptor role is filled by C73. 74-75 is a substrate binding site; sequence NT. Catalysis depends on C179, which acts as the Proton donor/acceptor. Substrate is bound at residue 180 to 181; the sequence is TH.

Belongs to the aspartate/glutamate racemases family.

It carries out the reaction L-glutamate = D-glutamate. It functions in the pathway cell wall biogenesis; peptidoglycan biosynthesis. In terms of biological role, provides the (R)-glutamate required for cell wall biosynthesis. The polypeptide is Glutamate racemase (Aliivibrio fischeri (strain MJ11) (Vibrio fischeri)).